Here is a 173-residue protein sequence, read N- to C-terminus: Putative C-type lectin protein FPV198 (173 aa).

In terms of domain architecture, C-type lectin spans 50-169 (GMSGWVQINN…CNKKHTGICF (120 aa)).

In Vertebrata (FPV), this protein is Putative C-type lectin protein FPV198.